The sequence spans 1488 residues: Calmodulin binding protein PICBP (1488 aa).

Disordered regions lie at residues 1 to 31 (MSNP…RKMW), 63 to 112 (TAES…SRIS), 280 to 329 (GPLG…GRSS), and 378 to 414 (HDHD…EEDG). Basic residues predominate over residues 18–31 (SSRRVHKRRERKMW). Residues 76 to 86 (DDSRTYSKSSD) are compositionally biased toward basic and acidic residues. Residues 98 to 107 (SVKRRAKSKS) are compositionally biased toward basic residues. Over residues 297 to 312 (DNVDGDSDEEVFEEEV) the composition is skewed to acidic residues. 2 calmodulin-binding regions span residues 493–592 (TFHM…SLIP) and 831–938 (NSLK…DIVL). Disordered stretches follow at residues 816 to 844 (IPDS…GETK) and 941 to 971 (HDTP…EGCE). Basic and acidic residues-rich tracts occupy residues 833–844 (LKEEKEHQGETK) and 954–971 (RNND…EGCE). The calmodulin-binding stretch occupies residues 1135–1229 (EKRVKGWNNV…SLLAQAFDTI (95 aa)). Disordered regions lie at residues 1232-1252 (QDMG…ISRQ) and 1316-1340 (EKNQ…DTSV). Over residues 1235–1252 (GSGSTPGSAASSRNISRQ) the composition is skewed to low complexity. Positions 1316-1328 (EKNQTLPEETRKE) are enriched in basic and acidic residues. Positions 1379-1483 (RQKSETLQVS…QLLVQAFESL (105 aa)) are calmodulin-binding.

In terms of biological role, binds calmodulin in a calcium-dependent manner in vitro. May play a role in general plant defense including R gene-mediated responses. The protein is Calmodulin binding protein PICBP of Arabidopsis thaliana (Mouse-ear cress).